We begin with the raw amino-acid sequence, 312 residues long: 4-diphosphocytidyl-2-C-methyl-D-erythritol kinase (312 aa).

Lysine 16 is a catalytic residue. 101-111 serves as a coordination point for ATP; that stretch reads PIGAGLAGGSS. The active site involves aspartate 143.

Belongs to the GHMP kinase family. IspE subfamily.

It carries out the reaction 4-CDP-2-C-methyl-D-erythritol + ATP = 4-CDP-2-C-methyl-D-erythritol 2-phosphate + ADP + H(+). It functions in the pathway isoprenoid biosynthesis; isopentenyl diphosphate biosynthesis via DXP pathway; isopentenyl diphosphate from 1-deoxy-D-xylulose 5-phosphate: step 3/6. Its function is as follows. Catalyzes the phosphorylation of the position 2 hydroxy group of 4-diphosphocytidyl-2C-methyl-D-erythritol. The protein is 4-diphosphocytidyl-2-C-methyl-D-erythritol kinase of Prochlorococcus marinus (strain MIT 9515).